Reading from the N-terminus, the 277-residue chain is Probable ABC transporter permease protein y4oR (277 aa).

7 helical membrane passes run 15 to 35, 79 to 99, 109 to 129, 140 to 160, 189 to 209, 213 to 233, and 242 to 262; these read LWTL…TWMV, VVTI…AYAL, LLVA…VPVY, TYQA…IWLM, IMMP…FIAV, FLFA…AMLG, and WDAV…FAFI. The ABC transmembrane type-1 domain maps to 74 to 263; sequence IINSAVVTIV…TPVIAFAFIM (190 aa).

The protein belongs to the binding-protein-dependent transport system permease family. MalFG subfamily.

The protein localises to the cell inner membrane. Its function is as follows. Probably part of the binding-protein-dependent transport system y4oPQRS. This system probably transports a sugar-like molecule. Probably responsible for the translocation of the substrate across the membrane. The protein is Probable ABC transporter permease protein y4oR of Sinorhizobium fredii (strain NBRC 101917 / NGR234).